The following is a 280-amino-acid chain: 2-dehydro-3-deoxyphosphooctonate aldolase (280 aa).

The protein belongs to the KdsA family.

It is found in the cytoplasm. It carries out the reaction D-arabinose 5-phosphate + phosphoenolpyruvate + H2O = 3-deoxy-alpha-D-manno-2-octulosonate-8-phosphate + phosphate. It functions in the pathway carbohydrate biosynthesis; 3-deoxy-D-manno-octulosonate biosynthesis; 3-deoxy-D-manno-octulosonate from D-ribulose 5-phosphate: step 2/3. It participates in bacterial outer membrane biogenesis; lipopolysaccharide biosynthesis. The polypeptide is 2-dehydro-3-deoxyphosphooctonate aldolase (Neisseria meningitidis serogroup C / serotype 2a (strain ATCC 700532 / DSM 15464 / FAM18)).